The sequence spans 877 residues: Alanine--tRNA ligase (877 aa).

His567, His571, Cys669, and His673 together coordinate Zn(2+).

Belongs to the class-II aminoacyl-tRNA synthetase family. Requires Zn(2+) as cofactor.

Its subcellular location is the cytoplasm. The catalysed reaction is tRNA(Ala) + L-alanine + ATP = L-alanyl-tRNA(Ala) + AMP + diphosphate. Catalyzes the attachment of alanine to tRNA(Ala) in a two-step reaction: alanine is first activated by ATP to form Ala-AMP and then transferred to the acceptor end of tRNA(Ala). Also edits incorrectly charged Ser-tRNA(Ala) and Gly-tRNA(Ala) via its editing domain. This chain is Alanine--tRNA ligase, found in Rickettsia rickettsii (strain Iowa).